Consider the following 502-residue polypeptide: Serine carboxypeptidase-like 40 (502 aa).

Residues 1 to 24 (MRKGQGYSYSVIASVLVLLCVVVS) form the signal peptide. N-linked (GlcNAc...) asparagine glycans are attached at residues asparagine 103 and asparagine 187. 3 cysteine pairs are disulfide-bonded: cysteine 136–cysteine 384, cysteine 293–cysteine 307, and cysteine 331–cysteine 352. Serine 229 is an active-site residue. 2 N-linked (GlcNAc...) asparagine glycosylation sites follow: asparagine 333 and asparagine 373. Aspartate 420 is an active-site residue. A glycan (N-linked (GlcNAc...) asparagine) is linked at asparagine 436. Histidine 473 is a catalytic residue.

The protein belongs to the peptidase S10 family. In terms of tissue distribution, expressed in roots, leaves, flowers and siliques.

It is found in the secreted. Functionally, probable carboxypeptidase. The polypeptide is Serine carboxypeptidase-like 40 (SCPL40) (Arabidopsis thaliana (Mouse-ear cress)).